A 124-amino-acid polypeptide reads, in one-letter code: Acidic phospholipase A2 BA1 (124 aa).

7 disulfides stabilise this stretch: cysteine 26–cysteine 116, cysteine 28–cysteine 44, cysteine 43–cysteine 95, cysteine 49–cysteine 124, cysteine 50–cysteine 88, cysteine 57–cysteine 81, and cysteine 75–cysteine 86. Ca(2+)-binding residues include tyrosine 27, glycine 29, and glycine 31. Histidine 47 is an active-site residue. Position 48 (aspartate 48) interacts with Ca(2+). The active site involves aspartate 89.

This sequence belongs to the phospholipase A2 family. Group II subfamily. D49 sub-subfamily. The cofactor is Ca(2+). As to expression, expressed by the venom gland.

The protein resides in the secreted. It carries out the reaction a 1,2-diacyl-sn-glycero-3-phosphocholine + H2O = a 1-acyl-sn-glycero-3-phosphocholine + a fatty acid + H(+). In terms of biological role, PLA2 catalyzes the calcium-dependent hydrolysis of the 2-acyl groups in 3-sn-phosphoglycerides. In Gloydius halys (Chinese water mocassin), this protein is Acidic phospholipase A2 BA1.